The primary structure comprises 272 residues: Probable feruloyl esterase C (272 aa).

A signal peptide spans 1–22 (MLPTILYSAILALSALTPSALA).

The protein belongs to the faeC family.

It localises to the secreted. It carries out the reaction feruloyl-polysaccharide + H2O = ferulate + polysaccharide.. In terms of biological role, involved in degradation of plant cell walls. Hydrolyzes the feruloyl-arabinose ester bond in arabinoxylans, and the feruloyl-galactose ester bond in pectin. Active against paranitrophenyl-acetate, methyl ferulate and wheat arabinoxylan. The polypeptide is Probable feruloyl esterase C (faeC-1) (Aspergillus clavatus (strain ATCC 1007 / CBS 513.65 / DSM 816 / NCTC 3887 / NRRL 1 / QM 1276 / 107)).